The following is a 76-amino-acid chain: Acyl carrier protein (76 aa).

Residues 1–75 (MIFEKIKDLI…DIVFYITKNT (75 aa)) enclose the Carrier domain. S35 carries the O-(pantetheine 4'-phosphoryl)serine modification.

This sequence belongs to the acyl carrier protein (ACP) family. 4'-phosphopantetheine is transferred from CoA to a specific serine of apo-ACP by AcpS. This modification is essential for activity because fatty acids are bound in thioester linkage to the sulfhydryl of the prosthetic group.

It localises to the cytoplasm. It participates in lipid metabolism; fatty acid biosynthesis. Carrier of the growing fatty acid chain in fatty acid biosynthesis. The sequence is that of Acyl carrier protein from Aster yellows witches'-broom phytoplasma (strain AYWB).